The chain runs to 475 residues: ATP synthase subunit beta (475 aa).

An ATP-binding site is contributed by 160–167 (GGAGVGKT).

Belongs to the ATPase alpha/beta chains family. In terms of assembly, F-type ATPases have 2 components, CF(1) - the catalytic core - and CF(0) - the membrane proton channel. CF(1) has five subunits: alpha(3), beta(3), gamma(1), delta(1), epsilon(1). CF(0) has three main subunits: a(1), b(2) and c(9-12). The alpha and beta chains form an alternating ring which encloses part of the gamma chain. CF(1) is attached to CF(0) by a central stalk formed by the gamma and epsilon chains, while a peripheral stalk is formed by the delta and b chains.

It localises to the cell membrane. It catalyses the reaction ATP + H2O + 4 H(+)(in) = ADP + phosphate + 5 H(+)(out). Functionally, produces ATP from ADP in the presence of a proton gradient across the membrane. The catalytic sites are hosted primarily by the beta subunits. This is ATP synthase subunit beta from Mycolicibacterium vanbaalenii (strain DSM 7251 / JCM 13017 / BCRC 16820 / KCTC 9966 / NRRL B-24157 / PYR-1) (Mycobacterium vanbaalenii).